The sequence spans 396 residues: MSDILLELLCVSEKAANIARACRQQETLFQLLIEEKKGAEKNKKFAADFKTLADVLVQEVIKQNMENKFPGLGKKVFGEESNEFTNDLGEKITVELQSTEEETAELLSKVLNGNMPASEALAQVVHEDVDLTDPTLESLDISIPHESLGIWVDPIDSTYQYIKGSANVKSNQGIFPSGLQCVTILIGVYDLQTGLPLMGVINQPFASQNLTTLRWKGQCYWGLSYMGTNIHSLQLAISKSDSETQTENSDREFSSPFSAVISTSEKDTIKAALSRVCGGSVFPAAGAGYKSLCVIQGLADIYIFSEDTTYKWDSCAAHAILRAMGGGIVDMKECLERSPDTGLDLPQLLYHVENKGASGVELWANKGGLIAYRSRNRLDTFLSRLIQNLGPVKTQA.

Asp54 contributes to the Li(+) binding site. Position 79 (Glu79) interacts with Mg(2+). A Li(+)-binding site is contributed by Glu80. Positions 153 and 155 each coordinate Mg(2+). Residues Asp156, Ser157, Thr158, Ser264, Lys266, Gly286, Ala287, Lys290, and Thr308 each coordinate 1D-myo-inositol 1,4-bisphosphate. Asp313 contributes to the Mg(2+) binding site. Ser314 carries the post-translational modification Phosphoserine.

The protein belongs to the inositol monophosphatase superfamily. In terms of assembly, monomer. Mg(2+) serves as cofactor.

The catalysed reaction is 1D-myo-inositol 1,4-bisphosphate + H2O = 1D-myo-inositol 4-phosphate + phosphate. It catalyses the reaction 1D-myo-inositol 1,3,4-trisphosphate + H2O = 1D-myo-inositol 3,4-bisphosphate + phosphate. Its pathway is signal transduction; phosphatidylinositol signaling pathway. Inhibited by Li(+). Its function is as follows. Mg(2+)-dependent phosphatase that catalyzes the hydrolysis of the 1-position phosphate from inositol 1,4-bisphosphate and inositol 1,3,4-trisphosphate and participates in inositol phosphate metabolism. This chain is Inositol polyphosphate 1-phosphatase, found in Mus musculus (Mouse).